Reading from the N-terminus, the 174-residue chain is uncharacterized protein (174 aa).

A run of 2 helical transmembrane segments spans residues 8–28 (FLFIVVFLFHGFMFSVVNYVF) and 146–166 (IVSWILYVFLLATLFLSIQFI).

The protein localises to the cell membrane. This is an uncharacterized protein from Haemophilus influenzae (strain ATCC 51907 / DSM 11121 / KW20 / Rd).